The following is a 310-amino-acid chain: Fructose-bisphosphate aldolase/6-deoxy-5-ketofructose 1-phosphate synthase (310 aa).

Substrate-binding positions include 48–49 (DQ), His-53, Asp-57, and Trp-180. The Proton donor role is filled by Tyr-182. Residues Arg-184, 213–215 (KVN), 241–243 (AGG), and 270–271 (GR) each bind substrate. Lys-213 functions as the Schiff-base intermediate with dihydroxyacetone-P in the catalytic mechanism. Catalysis depends on Lys-213, which acts as the Schiff-base intermediate with substrate.

This sequence belongs to the DeoC/FbaB aldolase family.

It catalyses the reaction beta-D-fructose 1,6-bisphosphate = D-glyceraldehyde 3-phosphate + dihydroxyacetone phosphate. It carries out the reaction beta-D-fructose 1,6-bisphosphate + methylglyoxal = 1-deoxy-D-threo-hexo-2,5-diulose 6-phosphate + D-glyceraldehyde 3-phosphate. The catalysed reaction is beta-D-fructose 1-phosphate + methylglyoxal = 1-deoxy-D-threo-hexo-2,5-diulose 6-phosphate + D-glyceraldehyde. It participates in aromatic compound metabolism. In terms of biological role, catalyzes the transaldolization of either fructose-1-P or fructose-1,6-bisphosphate with methylglyoxal to produce 6-deoxy-5-ketofructose-1-phosphate (DKFP). Also catalyzes the reversible aldol condensation of dihydroxyacetone phosphate (DHAP or glycerone-phosphate) with glyceraldehyde 3-phosphate (G3P or GAP) to produce fructose 1,6-bisphosphate (FBP). The protein is Fructose-bisphosphate aldolase/6-deoxy-5-ketofructose 1-phosphate synthase of Methanocaldococcus jannaschii (strain ATCC 43067 / DSM 2661 / JAL-1 / JCM 10045 / NBRC 100440) (Methanococcus jannaschii).